Here is a 187-residue protein sequence, read N- to C-terminus: UPF0200 protein MA_4660 (187 aa).

Residue 9 to 16 (GMPASGKS) coordinates ATP.

It belongs to the UPF0200 family.

This is UPF0200 protein MA_4660 from Methanosarcina acetivorans (strain ATCC 35395 / DSM 2834 / JCM 12185 / C2A).